Here is a 239-residue protein sequence, read N- to C-terminus: Ubiquinone biosynthesis O-methyltransferase (239 aa).

Residues arginine 45, glycine 64, aspartate 85, and methionine 129 each contribute to the S-adenosyl-L-methionine site.

This sequence belongs to the methyltransferase superfamily. UbiG/COQ3 family.

The enzyme catalyses a 3-demethylubiquinol + S-adenosyl-L-methionine = a ubiquinol + S-adenosyl-L-homocysteine + H(+). It carries out the reaction a 3-(all-trans-polyprenyl)benzene-1,2-diol + S-adenosyl-L-methionine = a 2-methoxy-6-(all-trans-polyprenyl)phenol + S-adenosyl-L-homocysteine + H(+). The protein operates within cofactor biosynthesis; ubiquinone biosynthesis. Functionally, O-methyltransferase that catalyzes the 2 O-methylation steps in the ubiquinone biosynthetic pathway. The polypeptide is Ubiquinone biosynthesis O-methyltransferase (Nitrosospira multiformis (strain ATCC 25196 / NCIMB 11849 / C 71)).